The primary structure comprises 147 residues: Siroheme decarboxylase NirG subunit (147 aa).

It belongs to the Ahb/Nir family. In terms of assembly, probably forms a complex composed of NirD, NirL, NirG and NirH. All proteins are required for the total conversion of siroheme to didecarboxysiroheme.

The enzyme catalyses siroheme + 2 H(+) = 12,18-didecarboxysiroheme + 2 CO2. Its pathway is porphyrin-containing compound metabolism. Involved in heme d1 biosynthesis. Catalyzes the decarboxylation of siroheme into didecarboxysiroheme. This chain is Siroheme decarboxylase NirG subunit, found in Stutzerimonas stutzeri (Pseudomonas stutzeri).